Here is a 202-residue protein sequence, read N- to C-terminus: Small ribosomal subunit protein uS4c (202 aa).

Positions 90 to 154 constitute an S4 RNA-binding domain; that stretch reads MRLDNIIFRL…SQSIIIKNLN (65 aa).

Belongs to the universal ribosomal protein uS4 family. In terms of assembly, part of the 30S ribosomal subunit. Contacts protein S5. The interaction surface between S4 and S5 is involved in control of translational fidelity.

The protein resides in the plastid. Its subcellular location is the chloroplast. In terms of biological role, one of the primary rRNA binding proteins, it binds directly to 16S rRNA where it nucleates assembly of the body of the 30S subunit. Its function is as follows. With S5 and S12 plays an important role in translational accuracy. This Marchantia polymorpha (Common liverwort) protein is Small ribosomal subunit protein uS4c (rps4).